The following is a 220-amino-acid chain: Small ribosomal subunit protein eS1 (220 aa).

Belongs to the eukaryotic ribosomal protein eS1 family.

The protein is Small ribosomal subunit protein eS1 of Methanococcus vannielii (strain ATCC 35089 / DSM 1224 / JCM 13029 / OCM 148 / SB).